Here is a 209-residue protein sequence, read N- to C-terminus: Pyridoxine/pyridoxamine 5'-phosphate oxidase (209 aa).

FMN is bound by residues R57 to K62, Y72 to T73, K79, and Q101. Position 62 (K62) interacts with substrate. Residues Y119, R123, and S127 each coordinate substrate. Residues Q136–S137 and W181 contribute to the FMN site. R187–H189 serves as a coordination point for substrate. An FMN-binding site is contributed by R191.

This sequence belongs to the pyridoxamine 5'-phosphate oxidase family. In terms of assembly, homodimer. The cofactor is FMN.

It catalyses the reaction pyridoxamine 5'-phosphate + O2 + H2O = pyridoxal 5'-phosphate + H2O2 + NH4(+). The enzyme catalyses pyridoxine 5'-phosphate + O2 = pyridoxal 5'-phosphate + H2O2. Its pathway is cofactor metabolism; pyridoxal 5'-phosphate salvage; pyridoxal 5'-phosphate from pyridoxamine 5'-phosphate: step 1/1. It participates in cofactor metabolism; pyridoxal 5'-phosphate salvage; pyridoxal 5'-phosphate from pyridoxine 5'-phosphate: step 1/1. Functionally, catalyzes the oxidation of either pyridoxine 5'-phosphate (PNP) or pyridoxamine 5'-phosphate (PMP) into pyridoxal 5'-phosphate (PLP). This Chelativorans sp. (strain BNC1) protein is Pyridoxine/pyridoxamine 5'-phosphate oxidase.